A 311-amino-acid polypeptide reads, in one-letter code: Malate dehydrogenase (311 aa).

NAD(+)-binding positions include 7–13 and Asp34; that span reads GAAGGIG. Substrate-binding residues include Arg81 and Arg87. NAD(+)-binding positions include Asn94 and 117-119; that span reads ITN. Substrate-binding residues include Asn119 and Arg153. His177 acts as the Proton acceptor in catalysis. NAD(+) is bound at residue Met227.

This sequence belongs to the LDH/MDH superfamily. MDH type 1 family. In terms of assembly, homodimer.

It carries out the reaction (S)-malate + NAD(+) = oxaloacetate + NADH + H(+). In terms of biological role, catalyzes the reversible oxidation of malate to oxaloacetate. The sequence is that of Malate dehydrogenase from Shewanella loihica (strain ATCC BAA-1088 / PV-4).